Here is a 573-residue protein sequence, read N- to C-terminus: DNA ligase (573 aa).

E250 serves as a coordination point for ATP. Residue K252 is the N6-AMP-lysine intermediate of the active site. R257, R272, E301, F342, R432, and K438 together coordinate ATP.

Belongs to the ATP-dependent DNA ligase family. The cofactor is Mg(2+).

The enzyme catalyses ATP + (deoxyribonucleotide)n-3'-hydroxyl + 5'-phospho-(deoxyribonucleotide)m = (deoxyribonucleotide)n+m + AMP + diphosphate.. In terms of biological role, DNA ligase that seals nicks in double-stranded DNA during DNA replication, DNA recombination and DNA repair. The chain is DNA ligase from Methanococcus vannielii (strain ATCC 35089 / DSM 1224 / JCM 13029 / OCM 148 / SB).